Consider the following 272-residue polypeptide: Shikimate dehydrogenase (NADP(+)) (272 aa).

Residues 16–18 and Thr-63 each bind shikimate; that span reads SLS. The active-site Proton acceptor is Lys-67. Residue Glu-79 participates in NADP(+) binding. Residues Asn-88 and Asp-103 each coordinate shikimate. NADP(+) is bound by residues 127–131, 151–156, and Ile-212; these read GAGGA and NRTMSR. Tyr-214 is a binding site for shikimate. Gly-235 is a binding site for NADP(+).

It belongs to the shikimate dehydrogenase family. In terms of assembly, homodimer.

It carries out the reaction shikimate + NADP(+) = 3-dehydroshikimate + NADPH + H(+). It participates in metabolic intermediate biosynthesis; chorismate biosynthesis; chorismate from D-erythrose 4-phosphate and phosphoenolpyruvate: step 4/7. Its function is as follows. Involved in the biosynthesis of the chorismate, which leads to the biosynthesis of aromatic amino acids. Catalyzes the reversible NADPH linked reduction of 3-dehydroshikimate (DHSA) to yield shikimate (SA). The sequence is that of Shikimate dehydrogenase (NADP(+)) from Staphylococcus epidermidis (strain ATCC 12228 / FDA PCI 1200).